Here is a 189-residue protein sequence, read N- to C-terminus: Adenylate kinase (189 aa).

Residue 10–15 (AAGKGT) coordinates ATP. Residues 30-59 (STGDMLRAAIASGSELGQKVKGVLDRGELV) are NMP. AMP contacts are provided by residues Thr31, Arg36, 57–59 (ELV), 85–88 (GFPR), and Gln92. The LID stretch occupies residues 126 to 136 (KRFAEQGRPDD). Arg127 provides a ligand contact to ATP. Arg133 and Arg144 together coordinate AMP. Ala172 is a binding site for ATP.

Belongs to the adenylate kinase family. Monomer.

The protein resides in the cytoplasm. The enzyme catalyses AMP + ATP = 2 ADP. It functions in the pathway purine metabolism; AMP biosynthesis via salvage pathway; AMP from ADP: step 1/1. Catalyzes the reversible transfer of the terminal phosphate group between ATP and AMP. Plays an important role in cellular energy homeostasis and in adenine nucleotide metabolism. This Caulobacter sp. (strain K31) protein is Adenylate kinase.